Here is a 364-residue protein sequence, read N- to C-terminus: Aminomethyltransferase (364 aa).

It belongs to the GcvT family. As to quaternary structure, the glycine cleavage system is composed of four proteins: P, T, L and H.

It carries out the reaction N(6)-[(R)-S(8)-aminomethyldihydrolipoyl]-L-lysyl-[protein] + (6S)-5,6,7,8-tetrahydrofolate = N(6)-[(R)-dihydrolipoyl]-L-lysyl-[protein] + (6R)-5,10-methylene-5,6,7,8-tetrahydrofolate + NH4(+). Its function is as follows. The glycine cleavage system catalyzes the degradation of glycine. The polypeptide is Aminomethyltransferase (Salmonella enteritidis PT4 (strain P125109)).